We begin with the raw amino-acid sequence, 570 residues long: Putative diflavin flavoprotein A 6 (570 aa).

The zinc metallo-hydrolase stretch occupies residues 38-231 (AKGTTANSYL…FPTRLYATGH (194 aa)). The Flavodoxin-like domain maps to 260–402 (VALIYASAYG…AGTDFAQALK (143 aa)). Residues 421–570 (VGRIVGSLCV…VHHRKSGNHY (150 aa)) are flavodoxin-reductase-like.

The protein in the N-terminal section; belongs to the zinc metallo-hydrolase group 3 family. In the C-terminal section; belongs to the flavodoxin reductase family. It depends on Fe cation as a cofactor.

In terms of biological role, mediates electron transfer from NADH to oxygen, reducing it to water. This modular protein has 3 redox cofactors, in other organisms the same activity requires 2 or 3 proteins. This chain is Putative diflavin flavoprotein A 6 (dfa6), found in Nostoc sp. (strain PCC 7120 / SAG 25.82 / UTEX 2576).